The primary structure comprises 373 residues: Glutamine synthetase (373 aa).

A GS beta-grasp domain is found at 24-106 (EKVQAMYIWI…VLCEVFKYNR (83 aa)). Residues 113–373 (LRHTCRRIMD…TGDEPFEYKN (261 aa)) form the GS catalytic domain. An ATP-binding site is contributed by Glu-134. 4 residues coordinate Mn(2+): Glu-134, Glu-136, Glu-196, and Glu-203. ATP is bound at residue 203-208 (EFQVGP). 246–247 (NW) serves as a coordination point for L-glutamate. His-253 lines the Mn(2+) pocket. ATP is bound by residues 255-257 (NFS), Arg-319, and Arg-324. L-glutamate is bound at residue Arg-319. Residue 336–338 (YFE) participates in ADP binding. Glu-338 is a binding site for Mn(2+). L-glutamate is bound at residue Arg-340.

It belongs to the glutamine synthetase family. In terms of assembly, homooctamer and homotetramer. Biotin is required as a cofactor. Mg(2+) serves as cofactor. Requires Mn(2+) as cofactor. Expressed in retina, brain and liver. Little or no detectable expression in breast muscle, pancreas and spleen.

The protein localises to the cytoplasm. The protein resides in the mitochondrion. It catalyses the reaction L-glutamate + NH4(+) + ATP = L-glutamine + ADP + phosphate + H(+). It carries out the reaction L-glutamate + H(+) = 4-aminobutanoate + CO2. Its activity is regulated as follows. Glutamate to glutamine ratio influences catalytic activity. At glutamate to glutamine ratios greater than 4, decarboxylase activity ceases. In the presence of manganese, synthetase activity is limited to concentrations between 10 mM and 20 mM, whereas decarboxylase activity is not affected. Both catalytic activities are inhibited by avidin. In terms of biological role, glutamine synthetase that catalyzes the ATP-dependent conversion of glutamate and ammonia to glutamine. When expressed in liver, it may be involved in detoxifying intramitochondrially generated ammonia. Also acts as glutamate decarboxylase by catalyzing the production of 4-aminobutanoate (gamma-aminobutyric acid, GABA) in a pyridoxal phosphate-independent manner. The sequence is that of Glutamine synthetase from Gallus gallus (Chicken).